Consider the following 392-residue polypeptide: Putative cystathionine gamma-lyase 2 (392 aa).

The tract at residues 32–55 is disordered; the sequence is LSSTYKQDNPGEPKGHDYSRAGNP. Over residues 40 to 50 the composition is skewed to basic and acidic residues; sequence NPGEPKGHDYS. Residues R51, Y103, and R108 each contribute to the substrate site. K203 carries the N6-(pyridoxal phosphate)lysine modification. A substrate-binding site is contributed by E330.

Belongs to the trans-sulfuration enzymes family. Requires pyridoxal 5'-phosphate as cofactor.

It is found in the cytoplasm. The catalysed reaction is L,L-cystathionine + H2O = 2-oxobutanoate + L-cysteine + NH4(+). It functions in the pathway amino-acid biosynthesis; L-cysteine biosynthesis; L-cysteine from L-homocysteine and L-serine: step 2/2. This Caenorhabditis elegans protein is Putative cystathionine gamma-lyase 2 (cth-2).